The sequence spans 469 residues: Pup--protein ligase (469 aa).

Residue glutamate 9 coordinates Mg(2+). Position 53 (arginine 53) interacts with ATP. Residue tyrosine 55 participates in Mg(2+) binding. Catalysis depends on aspartate 57, which acts as the Proton acceptor. Residue glutamate 63 coordinates Mg(2+). Threonine 66 and tryptophan 430 together coordinate ATP.

The protein belongs to the Pup ligase/Pup deamidase family. Pup-conjugating enzyme subfamily.

It catalyses the reaction ATP + [prokaryotic ubiquitin-like protein]-L-glutamate + [protein]-L-lysine = ADP + phosphate + N(6)-([prokaryotic ubiquitin-like protein]-gamma-L-glutamyl)-[protein]-L-lysine.. It participates in protein degradation; proteasomal Pup-dependent pathway. Its pathway is protein modification; protein pupylation. In terms of biological role, catalyzes the covalent attachment of the prokaryotic ubiquitin-like protein modifier Pup to the proteasomal substrate proteins, thereby targeting them for proteasomal degradation. This tagging system is termed pupylation. The ligation reaction involves the side-chain carboxylate of the C-terminal glutamate of Pup and the side-chain amino group of a substrate lysine. This is Pup--protein ligase from Kocuria rhizophila (strain ATCC 9341 / DSM 348 / NBRC 103217 / DC2201).